The chain runs to 262 residues: tRNA pseudouridine synthase A (262 aa).

Asp51 functions as the Nucleophile in the catalytic mechanism. Substrate is bound at residue Tyr109.

This sequence belongs to the tRNA pseudouridine synthase TruA family. Homodimer.

It catalyses the reaction uridine(38/39/40) in tRNA = pseudouridine(38/39/40) in tRNA. Its function is as follows. Formation of pseudouridine at positions 38, 39 and 40 in the anticodon stem and loop of transfer RNAs. In Aliivibrio salmonicida (strain LFI1238) (Vibrio salmonicida (strain LFI1238)), this protein is tRNA pseudouridine synthase A.